The chain runs to 143 residues: Large ribosomal subunit protein uL16 (143 aa).

The span at 1 to 17 (MLQPKKTKFRRSQKGRM) shows a compositional bias: basic residues. The segment at 1-25 (MLQPKKTKFRRSQKGRMKGNAQRGN) is disordered.

The protein belongs to the universal ribosomal protein uL16 family. Part of the 50S ribosomal subunit.

In terms of biological role, binds 23S rRNA and is also seen to make contacts with the A and possibly P site tRNAs. This is Large ribosomal subunit protein uL16 from Azobacteroides pseudotrichonymphae genomovar. CFP2.